The chain runs to 101 residues: Small ribosomal subunit protein uS14 (101 aa).

Basic and acidic residues predominate over residues 1-11 (MAKKSAIETNE). The interval 1 to 20 (MAKKSAIETNERRRKLATGH) is disordered.

Belongs to the universal ribosomal protein uS14 family. In terms of assembly, part of the 30S ribosomal subunit. Contacts proteins S3 and S10.

Functionally, binds 16S rRNA, required for the assembly of 30S particles and may also be responsible for determining the conformation of the 16S rRNA at the A site. This chain is Small ribosomal subunit protein uS14, found in Xanthobacter autotrophicus (strain ATCC BAA-1158 / Py2).